A 955-amino-acid chain; its full sequence is Histone deacetylase 6 (955 aa).

Histone deacetylase stretches follow at residues 15 to 337 and 425 to 749; these read TLIG…YAPF and METL…VLQN. The 1 role is filled by histidine 146. The 2 role is filled by histidine 561. Residues 815–840 are disordered; that stretch reads SIDMADQSSSSGSSSSSTRPSHNLEI. Low complexity predominate over residues 818–831; the sequence is MADQSSSSGSSSSS. The segment at 853–951 adopts a UBP-type zinc-finger fold; it reads ATCPHLKEVK…SAAHESKFGE (99 aa). Cysteine 855, histidine 857, cysteine 875, cysteine 878, cysteine 887, cysteine 890, and cysteine 895 together coordinate Zn(2+). The ubiquitin binding stretch occupies residues 896–898; sequence GRF. Residues histidine 902, histidine 906, histidine 912, cysteine 925, and cysteine 928 each coordinate Zn(2+). A ubiquitin binding region spans residues 924-931; the sequence is WCYPCDSY.

Belongs to the histone deacetylase family. HD type 2 subfamily. It depends on Zn(2+) as a cofactor.

The protein localises to the nucleus. The enzyme catalyses N(6)-acetyl-L-lysyl-[histone] + H2O = L-lysyl-[histone] + acetate. Its function is as follows. Probable histone deacetylase. Histone deacetylases are responsible for the deacetylation of lysine residues on the N-terminal part of the core histones (H2A, H2B, H3 and H4). Histone deacetylation gives a tag for epigenetic repression and plays an important role in transcriptional regulation, cell cycle progression and developmental events. Histone deacetylases act via the formation of large multiprotein complexes. This Caenorhabditis elegans protein is Histone deacetylase 6 (hda-6).